A 733-amino-acid polypeptide reads, in one-letter code: FYVE, RhoGEF and PH domain-containing protein 3 (733 aa).

Composition is skewed to polar residues over residues 1 to 11, 47 to 60, and 106 to 117; these read MELGRSSSTPQ, HSSS…STRE, and ETASDSRVPQDN. The disordered stretch occupies residues 1-134; that stretch reads MELGRSSSTP…GVGEEPDPKV (134 aa). Positions 118 to 129 are enriched in acidic residues; that stretch reads PQEEEDSGVGEE. Ser-124 bears the Phosphoserine mark. The DH domain occupies 153–337; the sequence is KLLHIAQELL…STAADHSNAA (185 aa). Residues 366-465 enclose the PH 1 domain; sequence ELIKEGSIQK…WIQVIQATVE (100 aa). A disordered region spans residues 481 to 535; that stretch reads CSQDEEPTLSPDQPVMSTSSVEPAGVADSNGGTPGIESRKSSSKTRRDKEKPGCK. Residues 517–533 show a composition bias toward basic and acidic residues; that stretch reads ESRKSSSKTRRDKEKPG. The FYVE-type zinc finger occupies 528-584; the sequence is DKEKPGCKSCGETFNSITKRRYRCKLCGEVICRKCSEFKAENSKQSRVCRECFLEEP. Zn(2+) is bound by residues Cys-534, Cys-537, Cys-551, Cys-554, Cys-559, Cys-562, Cys-576, and Cys-579. Disordered regions lie at residues 586 to 612 and 712 to 733; these read VPPS…DPRP and GDTA…TDTP. A PH 2 domain is found at 612-711; that stretch reads PSLLCGTLNL…WLKALGTAVH (100 aa). Phosphothreonine is present on Thr-732.

In terms of tissue distribution, detected in adult brain, spleen, lung and skeletal muscle. Detected in embryos from 7 dpc to 17 dpc.

It localises to the cytoplasm. The protein localises to the cytoskeleton. In terms of biological role, promotes the formation of filopodia. May activate CDC42, a member of the Ras-like family of Rho- and Rac proteins, by exchanging bound GDP for free GTP. Plays a role in regulating the actin cytoskeleton and cell shape. The chain is FYVE, RhoGEF and PH domain-containing protein 3 (Fgd3) from Mus musculus (Mouse).